A 241-amino-acid chain; its full sequence is Octanoyltransferase (241 aa).

In terms of domain architecture, BPL/LPL catalytic spans 49 to 233; that stretch reads GEASELVWLL…AFGEVFGPSE (185 aa). Substrate-binding positions include 87–94, 162–164, and 175–177; these read RGGQVTYH, AIG, and GIS. Residue cysteine 193 is the Acyl-thioester intermediate of the active site.

The protein belongs to the LipB family.

The protein resides in the cytoplasm. The enzyme catalyses octanoyl-[ACP] + L-lysyl-[protein] = N(6)-octanoyl-L-lysyl-[protein] + holo-[ACP] + H(+). The protein operates within protein modification; protein lipoylation via endogenous pathway; protein N(6)-(lipoyl)lysine from octanoyl-[acyl-carrier-protein]: step 1/2. Its function is as follows. Catalyzes the transfer of endogenously produced octanoic acid from octanoyl-acyl-carrier-protein onto the lipoyl domains of lipoate-dependent enzymes. Lipoyl-ACP can also act as a substrate although octanoyl-ACP is likely to be the physiological substrate. The polypeptide is Octanoyltransferase (Nitrobacter hamburgensis (strain DSM 10229 / NCIMB 13809 / X14)).